We begin with the raw amino-acid sequence, 546 residues long: CTP synthase (546 aa).

Positions 1-266 (MARYIFITGG…DTEVLDVFGL (266 aa)) are amidoligase domain. Ser-13 serves as a coordination point for CTP. A UTP-binding site is contributed by Ser-13. 14-19 (SLGKGL) lines the ATP pocket. Residue Tyr-54 participates in L-glutamine binding. Asp-71 lines the ATP pocket. Residues Asp-71 and Glu-140 each coordinate Mg(2+). Residues 147–149 (DIE), 187–192 (KTKPTQ), and Lys-223 contribute to the CTP site. UTP is bound by residues 187–192 (KTKPTQ) and Lys-223. The Glutamine amidotransferase type-1 domain occupies 293–545 (NIAIVGKYTG…IGAAKERSRL (253 aa)). Ala-357 is an L-glutamine binding site. Residue Cys-384 is the Nucleophile; for glutamine hydrolysis of the active site. Residues 385–388 (FGMQ), Glu-408, and Arg-473 each bind L-glutamine. Active-site residues include His-518 and Glu-520.

The protein belongs to the CTP synthase family. Homotetramer.

It carries out the reaction UTP + L-glutamine + ATP + H2O = CTP + L-glutamate + ADP + phosphate + 2 H(+). The enzyme catalyses L-glutamine + H2O = L-glutamate + NH4(+). The catalysed reaction is UTP + NH4(+) + ATP = CTP + ADP + phosphate + 2 H(+). It participates in pyrimidine metabolism; CTP biosynthesis via de novo pathway; CTP from UDP: step 2/2. Its activity is regulated as follows. Allosterically activated by GTP, when glutamine is the substrate; GTP has no effect on the reaction when ammonia is the substrate. The allosteric effector GTP functions by stabilizing the protein conformation that binds the tetrahedral intermediate(s) formed during glutamine hydrolysis. Inhibited by the product CTP, via allosteric rather than competitive inhibition. Catalyzes the ATP-dependent amination of UTP to CTP with either L-glutamine or ammonia as the source of nitrogen. Regulates intracellular CTP levels through interactions with the four ribonucleotide triphosphates. In Phenylobacterium zucineum (strain HLK1), this protein is CTP synthase.